Reading from the N-terminus, the 243-residue chain is 3-deoxy-manno-octulosonate cytidylyltransferase (243 aa).

The protein belongs to the KdsB family.

The protein localises to the cytoplasm. It carries out the reaction 3-deoxy-alpha-D-manno-oct-2-ulosonate + CTP = CMP-3-deoxy-beta-D-manno-octulosonate + diphosphate. The protein operates within nucleotide-sugar biosynthesis; CMP-3-deoxy-D-manno-octulosonate biosynthesis; CMP-3-deoxy-D-manno-octulosonate from 3-deoxy-D-manno-octulosonate and CTP: step 1/1. Its pathway is bacterial outer membrane biogenesis; lipopolysaccharide biosynthesis. Activates KDO (a required 8-carbon sugar) for incorporation into bacterial lipopolysaccharide in Gram-negative bacteria. This is 3-deoxy-manno-octulosonate cytidylyltransferase from Bartonella bacilliformis (strain ATCC 35685 / KC583 / Herrer 020/F12,63).